The primary structure comprises 191 residues: GDP-mannose pyrophosphatase (191 aa).

Residues 38-40 (IRE), R67, and 85-87 (AGL) each bind GDP-alpha-D-mannose. Positions 43 to 180 (DRGNGATILL…RIKDGKTIML (138 aa)) constitute a Nudix hydrolase domain. Residues A85, E100, and E104 each contribute to the Mg(2+) site. The Nudix box signature appears at 86–106 (GLLDNDSPEECIRREAMEETG). Residues E104, E127, 150 to 151 (DE), and K176 each bind GDP-alpha-D-mannose. E151 lines the Mg(2+) pocket.

The protein belongs to the Nudix hydrolase family. NudK subfamily. As to quaternary structure, homodimer. The cofactor is Mg(2+).

The catalysed reaction is GDP-alpha-D-mannose + H2O = alpha-D-mannose 1-phosphate + GMP + 2 H(+). Nucleoside diphosphate sugar hydrolase that hydrolyzes GDP-mannose as its preferred substrate, yielding GMP and mannose-1-phosphate. In Yersinia enterocolitica serotype O:8 / biotype 1B (strain NCTC 13174 / 8081), this protein is GDP-mannose pyrophosphatase (nudK).